A 309-amino-acid polypeptide reads, in one-letter code: Bifunctional methylenetetrahydrofolate dehydrogenase/cyclohydrolase, mitochondrial (309 aa).

This sequence belongs to the tetrahydrofolate dehydrogenase/cyclohydrolase family. In terms of assembly, homodimer. Requires Mg(2+) as cofactor.

It is found in the mitochondrion. The catalysed reaction is (6R)-5,10-methylene-5,6,7,8-tetrahydrofolate + NAD(+) = (6R)-5,10-methenyltetrahydrofolate + NADH. It catalyses the reaction (6R)-5,10-methenyltetrahydrofolate + H2O = (6R)-10-formyltetrahydrofolate + H(+). Its function is as follows. May play a role in spermatogenesis. The protein is Bifunctional methylenetetrahydrofolate dehydrogenase/cyclohydrolase, mitochondrial (Nmdmc) of Drosophila melanogaster (Fruit fly).